The following is a 78-amino-acid chain: Translation initiation factor IF-1, chloroplastic (78 aa).

The 72-residue stretch at 1–72 (MKKQNLIEME…TKGRITYRLR (72 aa)) folds into the S1-like domain.

Belongs to the IF-1 family. Component of the 30S ribosomal translation pre-initiation complex which assembles on the 30S ribosome in the order IF-2 and IF-3, IF-1 and N-formylmethionyl-tRNA(fMet); mRNA recruitment can occur at any time during PIC assembly.

It is found in the plastid. It localises to the chloroplast. In terms of biological role, one of the essential components for the initiation of protein synthesis. Stabilizes the binding of IF-2 and IF-3 on the 30S subunit to which N-formylmethionyl-tRNA(fMet) subsequently binds. Helps modulate mRNA selection, yielding the 30S pre-initiation complex (PIC). Upon addition of the 50S ribosomal subunit IF-1, IF-2 and IF-3 are released leaving the mature 70S translation initiation complex. This is Translation initiation factor IF-1, chloroplastic from Chaetosphaeridium globosum (Charophycean green alga).